The primary structure comprises 269 residues: Thiazole synthase (269 aa).

K112 functions as the Schiff-base intermediate with DXP in the catalytic mechanism. 1-deoxy-D-xylulose 5-phosphate contacts are provided by residues G173, 199-200, and 221-222; these read AG and NT.

Belongs to the ThiG family. As to quaternary structure, homotetramer. Forms heterodimers with either ThiH or ThiS.

The protein resides in the cytoplasm. The catalysed reaction is [ThiS sulfur-carrier protein]-C-terminal-Gly-aminoethanethioate + 2-iminoacetate + 1-deoxy-D-xylulose 5-phosphate = [ThiS sulfur-carrier protein]-C-terminal Gly-Gly + 2-[(2R,5Z)-2-carboxy-4-methylthiazol-5(2H)-ylidene]ethyl phosphate + 2 H2O + H(+). It participates in cofactor biosynthesis; thiamine diphosphate biosynthesis. Its function is as follows. Catalyzes the rearrangement of 1-deoxy-D-xylulose 5-phosphate (DXP) to produce the thiazole phosphate moiety of thiamine. Sulfur is provided by the thiocarboxylate moiety of the carrier protein ThiS. In vitro, sulfur can be provided by H(2)S. This is Thiazole synthase from Caulobacter vibrioides (strain ATCC 19089 / CIP 103742 / CB 15) (Caulobacter crescentus).